Here is a 172-residue protein sequence, read N- to C-terminus: MEGYRLLYPMRTYLVVSGHGDEANVMAADWVTVLSFDPFMVGVAIAPKRTTHKLIKKYNEFVISVPSLEMLRDVWIAGTKKGPSKLKDMGITLVPSRKVKVPSIKEALANIECEVYDTKDYGDHTLFVGKVLAYTYKEEAFEGGKPNLKFNFLAHVSWSEFVTFQDKIYRAE.

The protein belongs to the flavoredoxin family. It depends on FMN as a cofactor.

This is an uncharacterized protein from Pyrococcus abyssi (strain GE5 / Orsay).